A 235-amino-acid chain; its full sequence is Ubiquinone/menaquinone biosynthesis C-methyltransferase UbiE (235 aa).

Positions 59, 84, and 123 each coordinate S-adenosyl-L-methionine.

The protein belongs to the class I-like SAM-binding methyltransferase superfamily. MenG/UbiE family.

The catalysed reaction is a 2-demethylmenaquinol + S-adenosyl-L-methionine = a menaquinol + S-adenosyl-L-homocysteine + H(+). It carries out the reaction a 2-methoxy-6-(all-trans-polyprenyl)benzene-1,4-diol + S-adenosyl-L-methionine = a 5-methoxy-2-methyl-3-(all-trans-polyprenyl)benzene-1,4-diol + S-adenosyl-L-homocysteine + H(+). It functions in the pathway quinol/quinone metabolism; menaquinone biosynthesis; menaquinol from 1,4-dihydroxy-2-naphthoate: step 2/2. The protein operates within cofactor biosynthesis; ubiquinone biosynthesis. Functionally, methyltransferase required for the conversion of demethylmenaquinol (DMKH2) to menaquinol (MKH2) and the conversion of 2-polyprenyl-6-methoxy-1,4-benzoquinol (DDMQH2) to 2-polyprenyl-3-methyl-6-methoxy-1,4-benzoquinol (DMQH2). The chain is Ubiquinone/menaquinone biosynthesis C-methyltransferase UbiE from Campylobacter jejuni subsp. jejuni serotype O:23/36 (strain 81-176).